The sequence spans 294 residues: Autophagy protein 5 (294 aa).

Lys-149 participates in a covalent cross-link: Glycyl lysine isopeptide (Lys-Gly) (interchain with G-Cter in ATG12).

The protein belongs to the ATG5 family. As to quaternary structure, conjugated with ATG12. The ATG5-ATG12 conjugate forms a complex with several units of ATG16. The ATG12-ATG5 conjugate also associates with ATG3. Conjugated to ATG12; which is essential for autophagy. Conjugation with ATG12 involves ATG7 as an E1-like activating enzyme and ATG10 as an E2-like conjugating enzyme.

It localises to the preautophagosomal structure membrane. Functionally, involved in cytoplasm to vacuole transport (Cvt) and autophagic vesicle formation. Autophagy is essential for maintenance of amino acid levels and protein synthesis under nitrogen starvation. Required for selective autophagic degradation of the nucleus (nucleophagy). Also required for mitophagy, which eliminates defective or superfluous mitochondria in order to fulfill cellular energy requirements and prevent excess ROS production. Conjugation with ATG12, through a ubiquitin-like conjugating system involving ATG7 as an E1-like activating enzyme and ATG10 as an E2-like conjugating enzyme, is essential for its function. The ATG12-ATG5 conjugate acts as an E3-like enzyme which is required for lipidation of ATG8 and ATG8 association to the vesicle membranes. ATG12-ATG5 rearranges the ATG3 catalytic center and enhances its E2 activity. Plays a role in the regulation of filamentous growth and chronological longevity. This chain is Autophagy protein 5 (ATG5), found in Saccharomyces cerevisiae (strain YJM789) (Baker's yeast).